The chain runs to 299 residues: Rhodanese-like/PpiC domain-containing protein 12, chloroplastic (299 aa).

A chloroplast-targeting transit peptide spans 1–81; it reads MFRVTGTLSA…SGFPALKMRA (81 aa). Position 82 is an N-acetylserine (serine 82). The PpiC domain occupies 93–183; that stretch reads SREILVQHLL…FGLHLLQVLS (91 aa). Positions 205-297 constitute a Rhodanese domain; that stretch reads FMDEAQLIDV…YSLKVDPSIP (93 aa). Residue cysteine 257 is the Cysteine persulfide intermediate of the active site.

It is found in the plastid. The protein resides in the chloroplast. The protein is Rhodanese-like/PpiC domain-containing protein 12, chloroplastic of Arabidopsis thaliana (Mouse-ear cress).